The primary structure comprises 395 residues: E3 ubiquitin-protein ligase RDUF1 (395 aa).

2 disordered regions span residues 1–22 (MMPNSRSATITPTTESTTTTTT) and 107–130 (PVIVLHGGGGGGAGERVENEEGDG). The segment covering 9-22 (TITPTTESTTTTTT) has biased composition (low complexity). Positions 121–130 (ERVENEEGDG) are enriched in basic and acidic residues. The RING-type; atypical zinc finger occupies 215-256 (CAVCTEVFEAGIEGREMPCKHIFHGDCIVPWLSIRNSCPVCR).

In terms of tissue distribution, expressed in root tips, leaf tips, junction of carpels and pedicels, stigma, anthers, pollen, vasculature of sepals and petals, immature seeds and embryos.

The protein resides in the cytoplasm. Its subcellular location is the cytosol. It is found in the nucleus. The catalysed reaction is S-ubiquitinyl-[E2 ubiquitin-conjugating enzyme]-L-cysteine + [acceptor protein]-L-lysine = [E2 ubiquitin-conjugating enzyme]-L-cysteine + N(6)-ubiquitinyl-[acceptor protein]-L-lysine.. The protein operates within protein modification; protein ubiquitination. Its function is as follows. E3 ubiquitin-protein ligase involved in the positive regulation of abscisic acid-dependent drought stress responses. Involved in the positive regulation of responses to salt and osmotic stresses during seed germination and early seedling development. Possesses E3 ubiquitin ligase activity in vitro. This Arabidopsis thaliana (Mouse-ear cress) protein is E3 ubiquitin-protein ligase RDUF1.